Here is a 540-residue protein sequence, read N- to C-terminus: Pentatricopeptide repeat-containing protein At1g14470 (540 aa).

PPR repeat units follow at residues 70-104, 105-134, 135-165, 166-196, 197-227, 228-262, 263-297, 298-328, 330-364, 365-395, 397-431, 432-462, 463-497, and 498-528; these read NVFV…GIMP, DAFS…GFFK, DPYV…ISQR, KGSD…MPEN, DVVS…MPEK, SVVS…GVRP, NETT…RVRL, NCFV…LGTQ, NLVT…NVVS, WNSL…GDSK, DEVT…QIKL, NDSG…MKER, DVVS…GIEP, and DRVT…IRNP.

This sequence belongs to the PPR family. PCMP-A subfamily.

The polypeptide is Pentatricopeptide repeat-containing protein At1g14470 (PCMP-A4) (Arabidopsis thaliana (Mouse-ear cress)).